Consider the following 282-residue polypeptide: 4-diphosphocytidyl-2-C-methyl-D-erythritol kinase (282 aa).

Lysine 9 is a catalytic residue. 98-108 (PMGGGLGGGSS) contacts ATP. Aspartate 140 is an active-site residue.

It belongs to the GHMP kinase family. IspE subfamily. In terms of assembly, homodimer.

The enzyme catalyses 4-CDP-2-C-methyl-D-erythritol + ATP = 4-CDP-2-C-methyl-D-erythritol 2-phosphate + ADP + H(+). It functions in the pathway isoprenoid biosynthesis; isopentenyl diphosphate biosynthesis via DXP pathway; isopentenyl diphosphate from 1-deoxy-D-xylulose 5-phosphate: step 3/6. In terms of biological role, catalyzes the phosphorylation of the position 2 hydroxy group of 4-diphosphocytidyl-2C-methyl-D-erythritol. This is 4-diphosphocytidyl-2-C-methyl-D-erythritol kinase from Klebsiella pneumoniae (strain 342).